The sequence spans 313 residues: Ankyrin repeat family A protein 2 (313 aa).

5 ANK repeats span residues 148-180 (ANSL…HTDE), 181-213 (EGFT…LLGK), 214-246 (GRES…EYDW), 247-279 (NGGT…IETD), and 280-313 (SGYN…NIKE).

Interacts (via ANK repeats) with CCDC8 (via PxLPxI/L motif); mediates the interaction with the 3M complex which is composed of CCDC8, CUL7 and OBSL1. Interacts (via ANK repeats) with HDAC4 (via PxLPxI/L motif). Interacts (via ANK repeats) with HDAC5 (via PxLPxI/L motif). Interacts (via ANK repeats) with LRP2/megalin (via PxLPxI/L motif). Interacts (via ANK repeats) with RFX7 (via PxLPxI/L motif). Interacts with AHRR. Interacts with NEK6.

The protein localises to the cytoplasm. It is found in the cytoskeleton. Its subcellular location is the membrane. Its function is as follows. May regulate the interaction between the 3M complex and the histone deacetylases HDAC4 and HDAC5. May also regulate LRP2/megalin. The polypeptide is Ankyrin repeat family A protein 2 (ANKRA2) (Bos taurus (Bovine)).